Consider the following 301-residue polypeptide: Troponin T, cardiac muscle (301 aa).

Acidic residues-rich tracts occupy residues 1–42 and 50–74; these read MSDL…EEEA and AETEETQAEEDGQEEEDKEDEDGPV. 2 disordered regions span residues 1 to 99 and 125 to 223; these read MSDL…GERV and ENRK…KKKK. At Ser-2 the chain carries N-acetylserine. Ser-2 is modified (phosphoserine; by CK2). The span at 82-93 shows a compositional bias: pro residues; sequence RPFMPNLVPPKI. Composition is skewed to basic and acidic residues over residues 125 to 186 and 206 to 223; these read ENRK…DEAR and QTERKSGKRQTEREKKKK. A Phosphothreonine; by PKC/PRKCA modification is found at Thr-207. Ser-211 bears the Phosphoserine; by PKC/PRKCA mark. Thr-216 is subject to Phosphothreonine; by PKC/PRKCA and RAF1. Position 297 is a phosphothreonine; by PKC/PRKCA (Thr-297).

This sequence belongs to the troponin T family. As to quaternary structure, binds with troponins I and C to make the thin-filament regulatory complex, troponin. In terms of processing, phosphorylation at Thr-216 by PRKCA induces significant reduction in myofilament calcium sensitivity and actomyosin ATPase activity. The major isoform in adult heart is CTNT4.

Troponin T is the tropomyosin-binding subunit of troponin, the thin filament regulatory complex which confers calcium-sensitivity to striated muscle actomyosin ATPase activity. This Oryctolagus cuniculus (Rabbit) protein is Troponin T, cardiac muscle (TNNT2).